Consider the following 318-residue polypeptide: Energy-coupling factor transporter ATP-binding protein EcfA2 (318 aa).

An ABC transporter domain is found at 22-271 (LRAQGLKCVF…PEIMQTTSIA (250 aa)). 59 to 66 (GNSGSGKS) is a binding site for ATP.

This sequence belongs to the ABC transporter superfamily. Energy-coupling factor EcfA family. In terms of assembly, forms a stable energy-coupling factor (ECF) transporter complex composed of 2 membrane-embedded substrate-binding proteins (S component), 2 ATP-binding proteins (A component) and 2 transmembrane proteins (T component).

The protein resides in the cell membrane. Its function is as follows. ATP-binding (A) component of a common energy-coupling factor (ECF) ABC-transporter complex. Unlike classic ABC transporters this ECF transporter provides the energy necessary to transport a number of different substrates. This is Energy-coupling factor transporter ATP-binding protein EcfA2 from Mycoplasmoides gallisepticum (strain R(low / passage 15 / clone 2)) (Mycoplasma gallisepticum).